The primary structure comprises 136 residues: Diuretic hormone 41 (136 aa).

The signal sequence occupies residues 1–26 (MMWWAVWCAAMVAGSVFTAAAPPTDS). Positions 27-76 (IDLMQMDPSLADDESLGFAMQSLSGRYAAAPWLYLLADVSHDPQNGSDRV) are excised as a propeptide. An Isoleucine amide modification is found at isoleucine 119. The propeptide occupies 123-136 (GFHWAPSAKAAKFY).

Belongs to the sauvagine/corticotropin-releasing factor/urotensin I family.

The protein localises to the secreted. Its function is as follows. Regulation of fluid secretion. The polypeptide is Diuretic hormone 41 (dh41) (Bombyx mori (Silk moth)).